Consider the following 212-residue polypeptide: Peptide methionine sulfoxide reductase MsrA (212 aa).

Residue cysteine 52 is part of the active site.

This sequence belongs to the MsrA Met sulfoxide reductase family.

It catalyses the reaction L-methionyl-[protein] + [thioredoxin]-disulfide + H2O = L-methionyl-(S)-S-oxide-[protein] + [thioredoxin]-dithiol. The catalysed reaction is [thioredoxin]-disulfide + L-methionine + H2O = L-methionine (S)-S-oxide + [thioredoxin]-dithiol. In terms of biological role, has an important function as a repair enzyme for proteins that have been inactivated by oxidation. Catalyzes the reversible oxidation-reduction of methionine sulfoxide in proteins to methionine. This chain is Peptide methionine sulfoxide reductase MsrA, found in Shigella boydii serotype 18 (strain CDC 3083-94 / BS512).